Reading from the N-terminus, the 1327-residue chain is uncharacterized protein (1327 aa).

Residue 884–885 (WD) coordinates substrate. Glu-1023 functions as the Proton donor in the catalytic mechanism. Residue 1143 to 1144 (KQ) participates in substrate binding.

The protein in the N-terminal section; belongs to the trehalose phosphatase family. In the C-terminal section; belongs to the glycosyl hydrolase 65 family.

This is an uncharacterized protein from Mycobacterium tuberculosis (strain CDC 1551 / Oshkosh).